We begin with the raw amino-acid sequence, 338 residues long: Probable O-antigen biosynthesis glycosyltransferase WbiN (338 aa).

It belongs to the glycosyltransferase group 1 family. Glycosyltransferase 4 subfamily.

It catalyses the reaction N-acetyl-alpha-D-galactosaminyl-di-trans,octa-cis-undecaprenyl diphosphate + UDP-N-acetyl-alpha-D-galactosamine = alpha-D-GalNAc-(1-&gt;3)-alpha-D-GalNAc-di-trans,octa-cis-undecaprenyl diphosphate + UDP + H(+). It participates in bacterial outer membrane biogenesis; LPS O-antigen biosynthesis. Its function is as follows. Involved in the assembly of the O-repeating unit during O-antigen biosynthesis. The protein is Probable O-antigen biosynthesis glycosyltransferase WbiN of Escherichia coli.